The chain runs to 86 residues: Small ribosomal subunit protein uS17 (86 aa).

Belongs to the universal ribosomal protein uS17 family. Part of the 30S ribosomal subunit.

In terms of biological role, one of the primary rRNA binding proteins, it binds specifically to the 5'-end of 16S ribosomal RNA. This chain is Small ribosomal subunit protein uS17, found in Desulfitobacterium hafniense (strain DSM 10664 / DCB-2).